The primary structure comprises 511 residues: Histidine ammonia-lyase (511 aa).

A cross-link (5-imidazolinone (Ala-Gly)) is located at residues 143–145 (ASG). 2,3-didehydroalanine (Ser) is present on serine 144.

Belongs to the PAL/histidase family. Contains an active site 4-methylidene-imidazol-5-one (MIO), which is formed autocatalytically by cyclization and dehydration of residues Ala-Ser-Gly.

Its subcellular location is the cytoplasm. It catalyses the reaction L-histidine = trans-urocanate + NH4(+). It participates in amino-acid degradation; L-histidine degradation into L-glutamate; N-formimidoyl-L-glutamate from L-histidine: step 1/3. This Vibrio parahaemolyticus serotype O3:K6 (strain RIMD 2210633) protein is Histidine ammonia-lyase.